Here is a 364-residue protein sequence, read N- to C-terminus: Fructose-bisphosphate aldolase B (364 aa).

The residue at position 2 (A2) is an N-acetylalanine. At K13 the chain carries N6-succinyllysine. Residue S36 is modified to Phosphoserine. T39 carries the phosphothreonine modification. R43 provides a ligand contact to beta-D-fructose 1,6-bisphosphate. S89 is modified (phosphoserine). At T119 the chain carries Phosphothreonine. K121 carries the post-translational modification N6-succinyllysine. At S132 the chain carries Phosphoserine. E188 functions as the Proton acceptor in the catalytic mechanism. The active-site Schiff-base intermediate with dihydroxyacetone-P is K230. Residues S272, S276, S299, and S301 each carry the phosphoserine modification. 272 to 274 (SGG) contacts beta-D-fructose 1,6-bisphosphate. R304 contacts beta-D-fructose 1,6-bisphosphate. A Phosphoserine modification is found at S309. K317 carries the N6-succinyllysine modification.

It belongs to the class I fructose-bisphosphate aldolase family. In terms of assembly, homotetramer. Interacts with BBS1, BBS2, BBS4 and BBS7. Forms a ternary complex with G6PD and TP53; this interaction is direct.

The protein resides in the cytoplasm. It localises to the cytosol. It is found in the cytoskeleton. The protein localises to the microtubule organizing center. Its subcellular location is the centrosome. The protein resides in the centriolar satellite. It catalyses the reaction beta-D-fructose 1,6-bisphosphate = D-glyceraldehyde 3-phosphate + dihydroxyacetone phosphate. The catalysed reaction is beta-D-fructose 1-phosphate = D-glyceraldehyde + dihydroxyacetone phosphate. It participates in carbohydrate degradation; glycolysis; D-glyceraldehyde 3-phosphate and glycerone phosphate from D-glucose: step 4/4. Its pathway is carbohydrate biosynthesis; gluconeogenesis. The protein operates within carbohydrate metabolism; fructose metabolism. In terms of biological role, catalyzes the aldol cleavage of fructose 1,6-biphosphate to form two triosephosphates dihydroxyacetone phosphate and D-glyceraldehyde 3-phosphate in glycolysis as well as the reverse stereospecific aldol addition reaction in gluconeogenesis. In fructolysis, metabolizes fructose 1-phosphate derived from the phosphorylation of dietary fructose by fructokinase into dihydroxyacetone phosphate and D-glyceraldehyde. Acts as an adapter independently of its enzymatic activity, exerts a tumor suppressor role by stabilizing the ternary complex with G6PD and TP53 to inhibit G6PD activity and keep oxidative pentose phosphate metabolism in check. The protein is Fructose-bisphosphate aldolase B (Aldob) of Rattus norvegicus (Rat).